The sequence spans 89 residues: Small ribosomal subunit protein uS15 (89 aa).

Belongs to the universal ribosomal protein uS15 family. Part of the 30S ribosomal subunit. Forms a bridge to the 50S subunit in the 70S ribosome, contacting the 23S rRNA.

Its function is as follows. One of the primary rRNA binding proteins, it binds directly to 16S rRNA where it helps nucleate assembly of the platform of the 30S subunit by binding and bridging several RNA helices of the 16S rRNA. Forms an intersubunit bridge (bridge B4) with the 23S rRNA of the 50S subunit in the ribosome. The polypeptide is Small ribosomal subunit protein uS15 (Phocaeicola vulgatus (strain ATCC 8482 / DSM 1447 / JCM 5826 / CCUG 4940 / NBRC 14291 / NCTC 11154) (Bacteroides vulgatus)).